The following is a 147-amino-acid chain: Neocarzinostatin (147 aa).

Positions 1 to 34 (MVPISIIRNRVAKVAVGSAAVLGLAVGFQTPAVA) are cleaved as a signal peptide. 2 disulfide bridges follow: C71–C81 and C122–C127.

The protein belongs to the neocarzinostatin family.

NCS has antibiotic activity (for Gram-positive bacteria) and antitumor activity (for certain mouse tumors). NCS binds non-covalently to a chromophore which is the cytotoxic and mutagenic component of the antibiotic. The chromophore binds to DNA as a weak intercalator and causes single- and double-strand breaks. The chain is Neocarzinostatin (ncsA) from Streptomyces carzinostaticus.